The chain runs to 277 residues: Orotidine 5'-phosphate decarboxylase (277 aa).

Lysine 93 serves as the catalytic Proton donor.

It belongs to the OMP decarboxylase family. Type 2 subfamily.

The enzyme catalyses orotidine 5'-phosphate + H(+) = UMP + CO2. The protein operates within pyrimidine metabolism; UMP biosynthesis via de novo pathway; UMP from orotate: step 2/2. This Haloarcula marismortui (strain ATCC 43049 / DSM 3752 / JCM 8966 / VKM B-1809) (Halobacterium marismortui) protein is Orotidine 5'-phosphate decarboxylase.